The sequence spans 224 residues: Flagellar L-ring protein (224 aa).

Residues 1–15 form the signal peptide; it reads MARYLLLASTLLLAA. Residue Cys16 is the site of N-palmitoyl cysteine attachment. The S-diacylglycerol cysteine moiety is linked to residue Cys16.

Belongs to the FlgH family. As to quaternary structure, the basal body constitutes a major portion of the flagellar organelle and consists of four rings (L,P,S, and M) mounted on a central rod.

It is found in the cell outer membrane. The protein resides in the bacterial flagellum basal body. Assembles around the rod to form the L-ring and probably protects the motor/basal body from shearing forces during rotation. This chain is Flagellar L-ring protein, found in Shewanella sp. (strain ANA-3).